Reading from the N-terminus, the 537-residue chain is Cytochrome P450 86A8 (537 aa).

Residues 3 to 23 form a helical membrane-spanning segment; the sequence is ISTALMILSAITAYFLWLTFI. Cysteine 458 contributes to the heme binding site.

Belongs to the cytochrome P450 family. The cofactor is heme. In terms of tissue distribution, expressed in leaves, stems, flowers and siliques. Expressed at low levels in roots.

The protein localises to the membrane. It carries out the reaction an organic molecule + reduced [NADPH--hemoprotein reductase] + O2 = an alcohol + oxidized [NADPH--hemoprotein reductase] + H2O + H(+). In terms of biological role, catalyzes the omega-hydroxylation of various fatty acids (FA). Acts on saturated and unsaturated fatty acids with chain lengths from C12 to C18. May be involved in the biosynthesis of cutin in the epidermis which prevents post-genital organ fusions. Hydroxylated FAs may be important for trichome differentiation, establishment of apical dominance and senescence. The protein is Cytochrome P450 86A8 (CYP86A8) of Arabidopsis thaliana (Mouse-ear cress).